A 375-amino-acid chain; its full sequence is MSYLFNNYKRDNIEFVDANQNELIDKDNNVYLDFSSGIGVTNLGFNMEIYQAVYNQLNLIWHSPNLYLSSIQEEVAQKLIGQRDYLAFFCNSGTEANEAAIKLARKATGKSEIIAFKKSFHGRTYGAMSATGQKKITDQFGPVVPGFKFAIFNDFNSFKSLTSNNTAAVIIEIIQGESGVLPADSLFMKQLNEYCKQKDILIIVDEVQTGIGRTGKLYAHEHYQLSPDIITLAKGLGNGLPIGAMLGKKNLGHAFGYGSHGTTFGGNRLSLAAANQTLSIINDADLLNDVQSKGQFLIENLRKSLVNKRNVIEVRGVGLMVGIEVTNDPSQVVREAKRMGLIILTAGKNVIRLLPPLTITKKQLEKGIEILTEII.

Residues 93–94 and Phe120 each bind pyridoxal 5'-phosphate; that span reads GT. Position 123 (Arg123) interacts with N(2)-acetyl-L-ornithine. 205 to 208 provides a ligand contact to pyridoxal 5'-phosphate; it reads DEVQ. Lys234 is modified (N6-(pyridoxal phosphate)lysine). Residue Thr262 participates in N(2)-acetyl-L-ornithine binding. Thr263 contacts pyridoxal 5'-phosphate.

This sequence belongs to the class-III pyridoxal-phosphate-dependent aminotransferase family. ArgD subfamily. In terms of assembly, homodimer. Requires pyridoxal 5'-phosphate as cofactor.

Its subcellular location is the cytoplasm. It carries out the reaction N(2)-acetyl-L-ornithine + 2-oxoglutarate = N-acetyl-L-glutamate 5-semialdehyde + L-glutamate. The protein operates within amino-acid biosynthesis; L-arginine biosynthesis; N(2)-acetyl-L-ornithine from L-glutamate: step 4/4. The sequence is that of Acetylornithine aminotransferase from Staphylococcus epidermidis (strain ATCC 35984 / DSM 28319 / BCRC 17069 / CCUG 31568 / BM 3577 / RP62A).